A 330-amino-acid chain; its full sequence is Cobalamin biosynthesis protein CobD (330 aa).

4 consecutive transmembrane segments (helical) span residues 60-80 (TLVI…PPIV), 153-173 (GIIA…LLGV), 227-247 (LGIV…WKIF), and 308-328 (IVLF…FVLT).

This sequence belongs to the CobD/CbiB family.

It is found in the cell membrane. It participates in cofactor biosynthesis; adenosylcobalamin biosynthesis. Functionally, converts cobyric acid to cobinamide by the addition of aminopropanol on the F carboxylic group. The protein is Cobalamin biosynthesis protein CobD of Desulfotalea psychrophila (strain LSv54 / DSM 12343).